Reading from the N-terminus, the 130-residue chain is Small ribosomal subunit protein uS9 (130 aa).

Residues 98–130 (LKRAGLLTRDPRMKERKKPGLKKARRSPQFSKR) form a disordered region. The span at 111-130 (KERKKPGLKKARRSPQFSKR) shows a compositional bias: basic residues.

This sequence belongs to the universal ribosomal protein uS9 family.

In Staphylococcus carnosus (strain TM300), this protein is Small ribosomal subunit protein uS9 (rpsI).